Here is a 138-residue protein sequence, read N- to C-terminus: MLQQTLCLIKPDATQRNLIGKIISYLENAGLKIKAIKKLQLTQAQAEKFYLEHQDKPFFASLVGFMISAPIVAIVLEGENAIAHYRELMGATNPEQREAGTIRALYAISNQENSVHGSDSETSAKREIDYFFSKEEIC.

ATP is bound by residues K10, F58, R86, T92, R103, and N113. H116 acts as the Pros-phosphohistidine intermediate in catalysis.

Belongs to the NDK family. As to quaternary structure, homotetramer. Mg(2+) serves as cofactor.

It is found in the cytoplasm. The enzyme catalyses a 2'-deoxyribonucleoside 5'-diphosphate + ATP = a 2'-deoxyribonucleoside 5'-triphosphate + ADP. The catalysed reaction is a ribonucleoside 5'-diphosphate + ATP = a ribonucleoside 5'-triphosphate + ADP. Its function is as follows. Major role in the synthesis of nucleoside triphosphates other than ATP. The ATP gamma phosphate is transferred to the NDP beta phosphate via a ping-pong mechanism, using a phosphorylated active-site intermediate. This is Nucleoside diphosphate kinase from Haemophilus ducreyi (strain 35000HP / ATCC 700724).